The following is a 469-amino-acid chain: L-seryl-tRNA(Sec) selenium transferase (469 aa).

N6-(pyridoxal phosphate)lysine is present on Lys295.

This sequence belongs to the SelA family. It depends on pyridoxal 5'-phosphate as a cofactor.

Its subcellular location is the cytoplasm. It carries out the reaction L-seryl-tRNA(Sec) + selenophosphate + H(+) = L-selenocysteinyl-tRNA(Sec) + phosphate. The protein operates within aminoacyl-tRNA biosynthesis; selenocysteinyl-tRNA(Sec) biosynthesis; selenocysteinyl-tRNA(Sec) from L-seryl-tRNA(Sec) (bacterial route): step 1/1. In terms of biological role, converts seryl-tRNA(Sec) to selenocysteinyl-tRNA(Sec) required for selenoprotein biosynthesis. The protein is L-seryl-tRNA(Sec) selenium transferase of Methylocella silvestris (strain DSM 15510 / CIP 108128 / LMG 27833 / NCIMB 13906 / BL2).